Reading from the N-terminus, the 102-residue chain is Small ribosomal subunit protein uS10 (102 aa).

The protein belongs to the universal ribosomal protein uS10 family. As to quaternary structure, part of the 30S ribosomal subunit.

Its function is as follows. Involved in the binding of tRNA to the ribosomes. The polypeptide is Small ribosomal subunit protein uS10 (Leptospira biflexa serovar Patoc (strain Patoc 1 / Ames)).